Here is a 1812-residue protein sequence, read N- to C-terminus: MDQSILSKITSDDYVNAILHTSATRVGSDLHNAMCNVIVDQIKDSTEKNKKKKKIDVKRNLNEDQIQLLAELFPERRVVTSSVHRGTHSMAAAMRKIETDVIFTSFPKNGVIYDIGGNWATHAKRDDGGFVHCCCPILDFRDAQRKMTRLIDFNRFIDDAKVVSAEKAAVAAQIKKDCDLISENAKKDAYDANDLNGTWFCQNKFEDCVYDHSTLGDGKKEAYGMAIHSIYDIHLVDLVSAMERKKVRVLKGTFLFSADIIIGKKRGELPSVNGFYIIDGESIKYSFYDDPNCGYEHNLNSLMLYVTKTFVKAAGGAVYYLELTEMRGDTMFFTITDASEARVMGVLHDSSTKCLPLNKRDLVVFPLFDIDRATDELVFREELLSREFVNRALEYAFQLKDNQVTAEGLISYFASTNNAVVIGGSARKTSEKVDPKLLPMITTTLMVYQELQKAKQKRVLGKLKSKVKEELTLSGILESVVHRVFGRQSLYQRGLGVFAKWMQYSYGQDLVGIHDVPLYLEINDRIKLGSALKNVNGFSLSFSELDEKVSLYEEYERERQRISDEIVSEKIGLIGEGYVKVGESSLKPKQKVASRDGMAQWVSGECHLYNTMKCEEKPVEKPRRFSKVVLEEWISEGNCFALNNSFGDEVHWFDSLKEACGRAWRKQVSAVTFSDAEYFDNIENTENEELEEEEVIKTTEQVEQDWPIGNLPDVDPDDSASAQVCLTESASTSSDEDCDPMEQLIVAACERAFATKKFEEVTMDSQVVQSEEIEIVREGEHAHANLSSGESESSSQSQELVAVGSVPLSKWAQMVEDSEVRARQCAVDHDLSWDEVKYAKMPERPEEAEGDDFRTKAKREFLWYLKCKLVADKSTLVEIMRDFIYGQFHSGACETPKNACFLSYEKNVCGEWMFGKRYRHPSKGASSYAVRFTREDWKRAKLIKLQWKNAKAEENGEMSSDNSDKPIVPQGETGIYLFCDITFLMNEIPILNRLEISFKKRVQRRAPRITLVDGVPGCGKSTYVVKEANLVNQYVVTIGREAAEDLRERFKSERNATATQLKRVRTVDSYLLNDTQSRANVLHFDEALMAHAGMVYFCADDLSARSVICQGDSQQIPFINRVESITLRYSKLEIDNVVEKRLTYRSPLDVASYLTKKNFYGTSVVTSANPLVRSLKTVGPRDGMTSIYSIPKIPGTQYLTFLQSEKEEMRQYLGRGNWNVNTVHESQGKTYDNVVLCRLKATDNEIYPGGRNSSPYMVVGVTRHRRSLVYYTKAEDKLYFDLAEMLSVQEGKLMKHLHEEGVKXRQASKYEEIMVSDNAVTVPDVGNLVDLQEMYDIAFPGNSIVDTYFDGYEVATGGLQIDMNASLTYYPNRQMKMWKECRGMYPMLRTAMPEKRQSGLAEGLLALNKRNMAAPKLQESVNEFEVIESTIEKAKKVFFDESRIDNSKLETFEGAARWWVKQSCTAQKQMLADVRTLSEIDVTSYNFMIKGDVKPKLDLSPQSEYSALQTVVYPDKIVNALFGPIMKEINERIRVALKPHVIYNTRMTSDELDPAVEFLDVREDHESVEIDFSKFDKSKTSLHIRVVIELYKLFGLDEMIAYLWEKSQCQTTIKDRVNGIIAQILYQQESGNCDTYGSNTWSAALSLLESLPLEKATFMIFGGDDSLIFFPKGMVIEDPCRRLASMWNFDCKLFNFKNNSFCGKFLIKVGEKYKFAPDPYKLLTKLGRKDIKNSDLLSEIFTSIGDNYKSYDDYRVLEALNVAVMERYKLRCDVMFGLLALKKYINSFDLFASLFSHKGRYQRVEVGRNFEW.

The methyltransferase stretch occupies residues 58-820 (KRNLNEDQIQ…WAQMVEDSEV (763 aa)). In terms of domain architecture, Alphavirus-like MT spans 79 to 306 (VTSSVHRGTH…HNLNSLMLYV (228 aa)). Residues 543 to 573 (SELDEKVSLYEEYERERQRISDEIVSEKIGL) are a coiled coil. Residues 701–738 (QVEQDWPIGNLPDVDPDDSASAQVCLTESASTSSDEDC) are disordered. The segment covering 720-733 (ASAQVCLTESASTS) has biased composition (polar residues). In terms of domain architecture, (+)RNA virus helicase ATP-binding spans 979–1140 (CDITFLMNEI…KLEIDNVVEK (162 aa)). The tract at residues 1010 to 1272 (TLVDGVPGCG…RHRRSLVYYT (263 aa)) is helicase. Residue 1014–1021 (GVPGCGKS) participates in ATP binding. A (+)RNA virus helicase C-terminal domain is found at 1141-1303 (RLTYRSPLDV…MKHLHEEGVK (163 aa)). In terms of domain architecture, RdRp catalytic spans 1565–1678 (HESVEIDFSK…FFPKGMVIED (114 aa)).

Belongs to the ssRNA positive-strand viruses RNA-directed RNA polymerase family. As to quaternary structure, heterodimer of a large and a small subunit.

The catalysed reaction is RNA(n) + a ribonucleoside 5'-triphosphate = RNA(n+1) + diphosphate. It carries out the reaction ATP + H2O = ADP + phosphate + H(+). In terms of biological role, is an RNA-dependent RNA polymerase active in viral RNA replication. Is a methyltransferase active in RNA capping and an RNA helicase. Methyltransferase displays a cytoplasmic capping enzyme activity. This function is necessary since all viral RNAs are synthesized in the cytoplasm, and host capping enzymes are restricted to the nucleus. Helicase region probably exhibits NTPase and RNA unwinding activities (Potential). The polypeptide is Replicase large subunit (rep) (Potato mop-top virus (isolate Potato/Sweden/Sw) (PMTV)).